A 453-amino-acid polypeptide reads, in one-letter code: Ankyrin repeat and SOCS box protein 16 (453 aa).

ANK repeat units lie at residues 56 to 85, 110 to 139, 142 to 171, 175 to 204, 209 to 238, 242 to 279, and 283 to 312; these read CRDP…AANM, KQTA…ELDA, GGRA…KANV, EGTT…TVNL, SQET…DVGL, QGET…DARA, and KRHT…RAEV. An SOCS box domain is found at 398–450; it reads YSSALCMVNQPRQLQHLARLAVRARLGSRCRQGATRLPLPPLLRDYLLLRVEG.

Belongs to the ankyrin SOCS box (ASB) family.

The protein operates within protein modification; protein ubiquitination. May be a substrate-recognition component of a SCF-like ECS (Elongin-Cullin-SOCS-box protein) E3 ubiquitin-protein ligase complex which mediates the ubiquitination and subsequent proteasomal degradation of target proteins. In Homo sapiens (Human), this protein is Ankyrin repeat and SOCS box protein 16 (ASB16).